An 836-amino-acid chain; its full sequence is Protein translocase subunit SecA (836 aa).

ATP contacts are provided by residues Gln85, 103 to 107 (GEGKT), and Asp492. Positions 820, 822, 831, and 832 each coordinate Zn(2+).

This sequence belongs to the SecA family. Monomer and homodimer. Part of the essential Sec protein translocation apparatus which comprises SecA, SecYEG and auxiliary proteins SecDF. Other proteins may also be involved. It depends on Zn(2+) as a cofactor.

The protein resides in the cell membrane. The protein localises to the cytoplasm. It carries out the reaction ATP + H2O + cellular proteinSide 1 = ADP + phosphate + cellular proteinSide 2.. Its function is as follows. Part of the Sec protein translocase complex. Interacts with the SecYEG preprotein conducting channel. Has a central role in coupling the hydrolysis of ATP to the transfer of proteins into and across the cell membrane, serving as an ATP-driven molecular motor driving the stepwise translocation of polypeptide chains across the membrane. The sequence is that of Protein translocase subunit SecA from Clostridium botulinum (strain Eklund 17B / Type B).